We begin with the raw amino-acid sequence, 963 residues long: Iron-responsive element-binding protein 2 (963 aa).

Cys-512, Cys-578, and Cys-581 together coordinate [4Fe-4S] cluster.

Belongs to the aconitase/IPM isomerase family. Interacts with RBCK1 only in iron-rich conditions. Interacts (when associated with the 4Fe-4S) with FBXL5. Interacts with CIAO1 and CIAO2A. The cofactor is [4Fe-4S] cluster. In terms of processing, ubiquitinated and degraded by the proteasome in presence of high level of iron and oxygen. Ubiquitinated by a SCF complex containing FBXL5. Upon iron and oxygen depletion FBXL5 is degraded, preventing ubiquitination and allowing its RNA-binding activity.

The protein localises to the cytoplasm. Its function is as follows. RNA-binding protein that binds to iron-responsive elements (IRES), which are stem-loop structures found in the 5'-UTR of ferritin, and delta aminolevulinic acid synthase mRNAs, and in the 3'-UTR of transferrin receptor mRNA. Binding to the IRE element in ferritin results in the repression of its mRNA translation. Binding of the protein to the transferrin receptor mRNA inhibits the degradation of this otherwise rapidly degraded mRNA. This is Iron-responsive element-binding protein 2 (Ireb2) from Mus musculus (Mouse).